Reading from the N-terminus, the 807-residue chain is MKIHTTEALMKAEISRRSLMKTSALGSLALASSAFTLPFSQMVRAAEAPVEEKAVWSSCTVNCGSRCLLRLHVKDDTVYWVESDTTGDDVYGNHQVRACLRGRSIRRRMNHPDRLKYPMKRVGKRGEGKFERISWDEALDTISDNLRRILKDYGNEAVHVLYGTGVDGGNITNSNVPYRLMNSCGGFLSRYGSYSTAQISAAMSYMFGANDGNSPDDIANTKLVVMFGNNPAETRMSGGGVTYYVEQARERSNARMIVIDPRYNDTAAGREDEWLPIRPGTDGALACAIAWVLITENMVDQPFLDKYCVGYDEKTLPANAPRNAHYKAYILGEGPDGIAKTPEWAAKITSIPAEKIIQLAREIGSAKPAYICQGWGPQRHSNGEQTSRAIAMLSVLTGNVGINGGNSGVREGSWDLGVEWFPMLENPVKTQISVFTWTDAIDHGTEMTATRDGVRGKEKLDVPIKFLWCYASNTLINQHGDINHTHEVLQDDSKCEMIVGIDHFMTASAKYCDILLPDLMPTEQEDLISHESAGNMGYVILAQPATSAKFERKPIYWMLSEVAKRLGPDVYQTFTEGRSQHEWIKYLHAKTKERNPEMPDYEEMKTTGIFKKKCPEEHYVAFRAFREDPQANPLKTPSGKIEIYSERLAKIADTWELKKDEIIHPLPAYTPGFDGWDDPLRKTYPLQLTGFHYKARTHSSYGNIDVLQQACPQEVWINPIDAQARGIRHGDTVRVFNNNGEMLIAAKVTPRILPGVTAIGQGAWLKADMFGDRVDHGGSINILTSHRPSPLAKGNPSHSNLVQIEKV.

A signal peptide (tat-type signal) is located at residues 1-45 (MKIHTTEALMKAEISRRSLMKTSALGSLALASSAFTLPFSQMVRA). A 4Fe-4S Mo/W bis-MGD-type domain is found at 52 to 113 (EKAVWSSCTV…SIRRRMNHPD (62 aa)). Residues Cys-59, Cys-63, Cys-67, and Cys-99 each contribute to the [4Fe-4S] cluster site. Residue Ser-195 coordinates Mo-bis(molybdopterin guanine dinucleotide).

This sequence belongs to the prokaryotic molybdopterin-containing oxidoreductase family. As to quaternary structure, the complex consists of three subunits: YnfF, the reductase; YnfG, an electron transfer protein, and YnfH, a membrane anchor protein. [4Fe-4S] cluster is required as a cofactor. The cofactor is Mo-bis(molybdopterin guanine dinucleotide). Exported by the Tat system. The position of the signal peptide cleavage has not been experimentally proven. Can also be exported by the Sec system.

The protein localises to the cell membrane. Its function is as follows. Terminal reductase during anaerobic growth on various sulfoxide and N-oxide compounds. The chain is Probable dimethyl sulfoxide reductase chain YnfF (ynfF) from Escherichia coli (strain K12).